We begin with the raw amino-acid sequence, 72 residues long: Large ribosomal subunit protein bL31 (72 aa).

Residues Cys16, Cys18, Cys37, and Cys40 each contribute to the Zn(2+) site.

This sequence belongs to the bacterial ribosomal protein bL31 family. Type A subfamily. As to quaternary structure, part of the 50S ribosomal subunit. It depends on Zn(2+) as a cofactor.

Binds the 23S rRNA. The protein is Large ribosomal subunit protein bL31 of Pseudomonas fluorescens (strain Pf0-1).